The following is a 216-amino-acid chain: LHFPL tetraspan subfamily member 3 protein (216 aa).

4 consecutive transmembrane segments (helical) span residues 22 to 42, 96 to 116, 126 to 146, and 177 to 197; these read IGVLWAIFTTLFAIVNVVCFV, FFIGMSMVLVLSCIGCFALFF, ICGWMQLAAGTCLVLGCMIYP, and ILAIMGILDALILSFLAFVLG.

Belongs to the LHFP family.

It is found in the membrane. This Danio rerio (Zebrafish) protein is LHFPL tetraspan subfamily member 3 protein.